Consider the following 209-residue polypeptide: Uracil phosphoribosyltransferase (209 aa).

5-phospho-alpha-D-ribose 1-diphosphate-binding positions include R79, R104, and 131 to 139 (DPMLATGGS). Uracil-binding positions include I194 and 199-201 (GDA). Residue D200 coordinates 5-phospho-alpha-D-ribose 1-diphosphate.

Belongs to the UPRTase family. Mg(2+) serves as cofactor.

It carries out the reaction UMP + diphosphate = 5-phospho-alpha-D-ribose 1-diphosphate + uracil. The protein operates within pyrimidine metabolism; UMP biosynthesis via salvage pathway; UMP from uracil: step 1/1. With respect to regulation, allosterically activated by GTP. In terms of biological role, catalyzes the conversion of uracil and 5-phospho-alpha-D-ribose 1-diphosphate (PRPP) to UMP and diphosphate. The chain is Uracil phosphoribosyltransferase from Clostridioides difficile (strain 630) (Peptoclostridium difficile).